A 534-amino-acid polypeptide reads, in one-letter code: Probable bifunctional tRNA threonylcarbamoyladenosine biosynthesis protein (534 aa).

The kae1 stretch occupies residues 1 to 324 (MICLGIEGTA…YRTDQVEVTW (324 aa)). Histidine 108, histidine 112, and tyrosine 129 together coordinate Fe cation. Residues 129 to 133 (YTSGG), aspartate 161, glycine 174, glutamate 178, and asparagine 258 each bind L-threonylcarbamoyladenylate. Aspartate 286 lines the Fe cation pocket. One can recognise a Protein kinase domain in the interval 335-534 (LPDNIKEKGA…DEIEKRGRYL (200 aa)). Residues 340–348 (KEKGAEADI) and lysine 361 contribute to the ATP site. Residue aspartate 455 is the Proton acceptor; for kinase activity of the active site.

It in the N-terminal section; belongs to the KAE1 / TsaD family. The protein in the C-terminal section; belongs to the protein kinase superfamily. Tyr protein kinase family. BUD32 subfamily. Component of the KEOPS complex that consists of Kae1, Bud32, Cgi121 and Pcc1; the whole complex dimerizes. Requires Fe(2+) as cofactor.

It is found in the cytoplasm. The catalysed reaction is L-seryl-[protein] + ATP = O-phospho-L-seryl-[protein] + ADP + H(+). It catalyses the reaction L-threonyl-[protein] + ATP = O-phospho-L-threonyl-[protein] + ADP + H(+). The enzyme catalyses L-threonylcarbamoyladenylate + adenosine(37) in tRNA = N(6)-L-threonylcarbamoyladenosine(37) in tRNA + AMP + H(+). In terms of biological role, required for the formation of a threonylcarbamoyl group on adenosine at position 37 (t(6)A37) in tRNAs that read codons beginning with adenine. Is a component of the KEOPS complex that is probably involved in the transfer of the threonylcarbamoyl moiety of threonylcarbamoyl-AMP (TC-AMP) to the N6 group of A37. The Kae1 domain likely plays a direct catalytic role in this reaction. The Bud32 domain probably displays kinase activity that regulates Kae1 function. This Methanosphaera stadtmanae (strain ATCC 43021 / DSM 3091 / JCM 11832 / MCB-3) protein is Probable bifunctional tRNA threonylcarbamoyladenosine biosynthesis protein.